The primary structure comprises 430 residues: Adenosylhomocysteinase (430 aa).

Substrate contacts are provided by Thr56, Asp131, and Glu156. 157–159 (TTT) serves as a coordination point for NAD(+). Substrate is bound by residues Lys186 and Asp190. Residues Asn191, 220–225 (GFGDVG), Glu243, Asn278, 299–301 (IGH), and Asn344 contribute to the NAD(+) site.

The protein belongs to the adenosylhomocysteinase family. NAD(+) serves as cofactor.

It localises to the cytoplasm. The catalysed reaction is S-adenosyl-L-homocysteine + H2O = L-homocysteine + adenosine. It participates in amino-acid biosynthesis; L-homocysteine biosynthesis; L-homocysteine from S-adenosyl-L-homocysteine: step 1/1. Functionally, may play a key role in the regulation of the intracellular concentration of adenosylhomocysteine. The chain is Adenosylhomocysteinase from Halorhodospira halophila (strain DSM 244 / SL1) (Ectothiorhodospira halophila (strain DSM 244 / SL1)).